The sequence spans 471 residues: Argininosuccinate lyase (471 aa).

The protein belongs to the lyase 1 family. Argininosuccinate lyase subfamily.

Its subcellular location is the cytoplasm. The enzyme catalyses 2-(N(omega)-L-arginino)succinate = fumarate + L-arginine. Its pathway is amino-acid biosynthesis; L-arginine biosynthesis; L-arginine from L-ornithine and carbamoyl phosphate: step 3/3. This chain is Argininosuccinate lyase, found in Acidiphilium cryptum (strain JF-5).